Reading from the N-terminus, the 557-residue chain is 2-succinyl-5-enolpyruvyl-6-hydroxy-3-cyclohexene-1-carboxylate synthase (557 aa).

The disordered stretch occupies residues 183–206 (YGGTEHPPVAPPLPPRRAPRAAAP).

It belongs to the TPP enzyme family. MenD subfamily. In terms of assembly, homodimer. It depends on Mg(2+) as a cofactor. Mn(2+) is required as a cofactor. Requires thiamine diphosphate as cofactor.

It carries out the reaction isochorismate + 2-oxoglutarate + H(+) = 5-enolpyruvoyl-6-hydroxy-2-succinyl-cyclohex-3-ene-1-carboxylate + CO2. Its pathway is quinol/quinone metabolism; 1,4-dihydroxy-2-naphthoate biosynthesis; 1,4-dihydroxy-2-naphthoate from chorismate: step 2/7. The protein operates within quinol/quinone metabolism; menaquinone biosynthesis. Catalyzes the thiamine diphosphate-dependent decarboxylation of 2-oxoglutarate and the subsequent addition of the resulting succinic semialdehyde-thiamine pyrophosphate anion to isochorismate to yield 2-succinyl-5-enolpyruvyl-6-hydroxy-3-cyclohexene-1-carboxylate (SEPHCHC). This chain is 2-succinyl-5-enolpyruvyl-6-hydroxy-3-cyclohexene-1-carboxylate synthase, found in Halorhodospira halophila (strain DSM 244 / SL1) (Ectothiorhodospira halophila (strain DSM 244 / SL1)).